Reading from the N-terminus, the 293-residue chain is Epidermal growth factor-like protein 8 (293 aa).

An N-terminal signal peptide occupies residues 1–25 (MGSRAELCTLLGGFSFLLLLIPGEG). The EMI domain maps to 34–112 (SQGVCSKQTL…RHPGALTCEA (79 aa)). 9 disulfides stabilise this stretch: cysteine 38–cysteine 97, cysteine 65–cysteine 71, cysteine 96–cysteine 110, cysteine 114–cysteine 124, cysteine 118–cysteine 130, cysteine 132–cysteine 141, cysteine 148–cysteine 159, cysteine 155–cysteine 168, and cysteine 170–cysteine 183. A glycan (N-linked (GlcNAc...) asparagine) is linked at asparagine 50. The region spanning 111-142 (EAICAKPCLNGGVCVRPDQCECAPGWGGKHCH) is the EGF-like 1 domain. The EGF-like 2; calcium-binding domain occupies 144 to 184 (DVDECRTSITLCSHHCFNTAGSFTCGCPHDLVLGVDGRTCM). A coiled-coil region spans residues 195-232 (SILSVAVREAEKDERALKQEIHELRGRLERLEQWAGQA).

The protein resides in the secreted. This chain is Epidermal growth factor-like protein 8 (EGFL8), found in Homo sapiens (Human).